We begin with the raw amino-acid sequence, 98 residues long: Ferredoxin-like protein (98 aa).

A 4Fe-4S ferredoxin-type domain is found at 57-87 (GQVEVTADGCMECGTCRVLCEANGDVEWSYP).

This sequence to ferredoxins from P.putida and C.tartarivorum, ferredoxin I from A.vinelandii, ferredoxin II from D.desulfuricans.

Could be a 3Fe-4S cluster-containing protein. The sequence is that of Ferredoxin-like protein (fixX) from Rhizobium meliloti (strain 1021) (Ensifer meliloti).